We begin with the raw amino-acid sequence, 321 residues long: Glutaminase (321 aa).

Substrate-binding residues include serine 69, asparagine 120, glutamate 165, asparagine 172, tyrosine 196, tyrosine 248, and valine 266.

This sequence belongs to the glutaminase family. Homotetramer.

The catalysed reaction is L-glutamine + H2O = L-glutamate + NH4(+). This is Glutaminase from Bacteroides thetaiotaomicron (strain ATCC 29148 / DSM 2079 / JCM 5827 / CCUG 10774 / NCTC 10582 / VPI-5482 / E50).